The primary structure comprises 214 residues: Phosphatidylcholine transfer protein (214 aa).

Met1 is modified (N-acetylmethionine). In terms of domain architecture, START spans 1–212; sequence MELAAGSFSE…MARACQNYLK (212 aa). The a 1,2-diacyl-sn-glycero-3-phosphocholine site is built by Tyr72 and Arg78. Ser139 is modified (phosphoserine). A 1,2-diacyl-sn-glycero-3-phosphocholine is bound at residue Gln157.

Interacts with ACOT13/THEM2. In terms of tissue distribution, highest expression in liver, placenta, testis, kidney and heart. Low levels in brain and lung. No expression detected in thymus.

It localises to the cytoplasm. Functionally, catalyzes the transfer of phosphatidylcholine between membranes. Binds a single lipid molecule. This is Phosphatidylcholine transfer protein (PCTP) from Homo sapiens (Human).